The sequence spans 143 residues: Large ribosomal subunit protein uL11 (143 aa).

The protein belongs to the universal ribosomal protein uL11 family. As to quaternary structure, part of the ribosomal stalk of the 50S ribosomal subunit. Interacts with L10 and the large rRNA to form the base of the stalk. L10 forms an elongated spine to which L12 dimers bind in a sequential fashion forming a multimeric L10(L12)X complex. One or more lysine residues are methylated.

Forms part of the ribosomal stalk which helps the ribosome interact with GTP-bound translation factors. The polypeptide is Large ribosomal subunit protein uL11 (Ralstonia nicotianae (strain ATCC BAA-1114 / GMI1000) (Ralstonia solanacearum)).